The sequence spans 625 residues: Endoglucanase 13 (625 aa).

Positions 1–34 (MAATMNKTPATTFLLIPAAASLVLLLAAAASVEA) are cleaved as a signal peptide. Aspartate 91 (nucleophile) is an active-site residue. Histidine 427 is a catalytic residue. Asparagine 440 carries N-linked (GlcNAc...) asparagine glycosylation. Catalysis depends on residues aspartate 479 and glutamate 488. The tract at residues 509 to 530 (ADNTPEYTPAPNAPSPSNGGSP) is disordered.

It belongs to the glycosyl hydrolase 9 (cellulase E) family.

It is found in the secreted. It catalyses the reaction Endohydrolysis of (1-&gt;4)-beta-D-glucosidic linkages in cellulose, lichenin and cereal beta-D-glucans.. The chain is Endoglucanase 13 (GLU6) from Oryza sativa subsp. indica (Rice).